We begin with the raw amino-acid sequence, 317 residues long: Pantothenate kinase (317 aa).

99–106 (GSVSVGKS) provides a ligand contact to ATP.

Belongs to the prokaryotic pantothenate kinase family.

It localises to the cytoplasm. It carries out the reaction (R)-pantothenate + ATP = (R)-4'-phosphopantothenate + ADP + H(+). The protein operates within cofactor biosynthesis; coenzyme A biosynthesis; CoA from (R)-pantothenate: step 1/5. In Histophilus somni (strain 129Pt) (Haemophilus somnus), this protein is Pantothenate kinase.